The sequence spans 718 residues: Quinolinate synthase, chloroplastic (718 aa).

The span at 1-22 (MALALSVAPTSSSLSSLLSRTP) shows a compositional bias: low complexity. The interval 1 to 29 (MALALSVAPTSSSLSSLLSRTPNPSPNFR) is disordered. Residues 1-70 (MALALSVAPT…VNASPFSISA (70 aa)) constitute a chloroplast transit peptide. The active-site Cysteine persulfide intermediate is the cysteine 132. Residues histidine 280 and serine 306 each contribute to the iminosuccinate site. Cysteine 360 is a binding site for [4Fe-4S] cluster. Iminosuccinate contacts are provided by residues 389-391 (YIN) and serine 411. Cysteine 484 contacts [4Fe-4S] cluster. Iminosuccinate is bound by residues 510-512 (HLE) and threonine 535. Residue cysteine 640 coordinates [4Fe-4S] cluster.

The protein belongs to the quinolinate synthase family. Type 1 subfamily. As to quaternary structure, homodimer. Interacts in vitro with NFS2, CpNIFS3 and AO. Part of a Cys defulfurase complex. It depends on [4Fe-4S] cluster as a cofactor. Expressed in roots, leaves, stems and flowers.

Its subcellular location is the plastid. It localises to the chloroplast. The enzyme catalyses iminosuccinate + dihydroxyacetone phosphate = quinolinate + phosphate + 2 H2O + H(+). Its pathway is cofactor biosynthesis; NAD(+) biosynthesis; quinolinate from iminoaspartate: step 1/1. In terms of biological role, catalyzes the condensation of iminoaspartate with dihydroxyacetone phosphate to form quinolinate. Can complement nadA-deficient E.coli mutant. Essential for the de novo synthesis of NAD. Also participates in cysteine desulfurization mediated by NFS2. Can activate the cysteine desulfurase activity of NFS2 in vitro. This is Quinolinate synthase, chloroplastic from Arabidopsis thaliana (Mouse-ear cress).